Consider the following 346-residue polypeptide: Tetraacyldisaccharide 4'-kinase (346 aa).

62 to 69 (TAGGTGKT) is an ATP binding site.

Belongs to the LpxK family.

The enzyme catalyses a lipid A disaccharide + ATP = a lipid IVA + ADP + H(+). The protein operates within glycolipid biosynthesis; lipid IV(A) biosynthesis; lipid IV(A) from (3R)-3-hydroxytetradecanoyl-[acyl-carrier-protein] and UDP-N-acetyl-alpha-D-glucosamine: step 6/6. Its function is as follows. Transfers the gamma-phosphate of ATP to the 4'-position of a tetraacyldisaccharide 1-phosphate intermediate (termed DS-1-P) to form tetraacyldisaccharide 1,4'-bis-phosphate (lipid IVA). The polypeptide is Tetraacyldisaccharide 4'-kinase (Xanthomonas oryzae pv. oryzae (strain MAFF 311018)).